Consider the following 173-residue polypeptide: MTRILGIDPGSQRTGVGIIDVDATGRVSYVHHQPLVLLGADDFPQRMKLLVLGLADLCREYEPQEVAIERVFMARNPDSALKLGQARGAAISAVVLRDLPVHEYAASEIKLAVVGRGGAEKQQVQHMVGLMLNLKIKLQADAADALAVAITHAHVRATANRLGLSARQAWGRK.

Active-site residues include Asp-8, Glu-69, and Asp-141. Residues Asp-8, Glu-69, and Asp-141 each coordinate Mg(2+).

It belongs to the RuvC family. In terms of assembly, homodimer which binds Holliday junction (HJ) DNA. The HJ becomes 2-fold symmetrical on binding to RuvC with unstacked arms; it has a different conformation from HJ DNA in complex with RuvA. In the full resolvosome a probable DNA-RuvA(4)-RuvB(12)-RuvC(2) complex forms which resolves the HJ. Mg(2+) serves as cofactor.

It localises to the cytoplasm. It catalyses the reaction Endonucleolytic cleavage at a junction such as a reciprocal single-stranded crossover between two homologous DNA duplexes (Holliday junction).. The RuvA-RuvB-RuvC complex processes Holliday junction (HJ) DNA during genetic recombination and DNA repair. Endonuclease that resolves HJ intermediates. Cleaves cruciform DNA by making single-stranded nicks across the HJ at symmetrical positions within the homologous arms, yielding a 5'-phosphate and a 3'-hydroxyl group; requires a central core of homology in the junction. The consensus cleavage sequence is 5'-(A/T)TT(C/G)-3'. Cleavage occurs on the 3'-side of the TT dinucleotide at the point of strand exchange. HJ branch migration catalyzed by RuvA-RuvB allows RuvC to scan DNA until it finds its consensus sequence, where it cleaves and resolves the cruciform DNA. This chain is Crossover junction endodeoxyribonuclease RuvC, found in Stenotrophomonas maltophilia (strain K279a).